The primary structure comprises 391 residues: F-box protein At2g34280 (391 aa).

Positions 1–43 constitute an F-box domain; the sequence is MDLLPYDVVEHILERLDVKSLLNCKSVSKQWRSTIRCRAFQER.

The polypeptide is F-box protein At2g34280 (Arabidopsis thaliana (Mouse-ear cress)).